The sequence spans 348 residues: Protein RecA (348 aa).

67–74 (GPESSGKT) serves as a coordination point for ATP.

It belongs to the RecA family.

The protein resides in the cytoplasm. Functionally, can catalyze the hydrolysis of ATP in the presence of single-stranded DNA, the ATP-dependent uptake of single-stranded DNA by duplex DNA, and the ATP-dependent hybridization of homologous single-stranded DNAs. It interacts with LexA causing its activation and leading to its autocatalytic cleavage. This chain is Protein RecA, found in Clostridioides difficile (strain 630) (Peptoclostridium difficile).